A 303-amino-acid chain; its full sequence is tRNA dimethylallyltransferase (303 aa).

16–23 (GPTASGKS) is a binding site for ATP. 18 to 23 (TASGKS) contacts substrate. Positions 41-44 (DSMQ) are interaction with substrate tRNA. Residues 141–161 (AEALHGELSARDPETAGRVRP) are disordered. Residues 165-169 (QRIVR) form an interaction with substrate tRNA region.

It belongs to the IPP transferase family. In terms of assembly, monomer. The cofactor is Mg(2+).

The catalysed reaction is adenosine(37) in tRNA + dimethylallyl diphosphate = N(6)-dimethylallyladenosine(37) in tRNA + diphosphate. Its function is as follows. Catalyzes the transfer of a dimethylallyl group onto the adenine at position 37 in tRNAs that read codons beginning with uridine, leading to the formation of N6-(dimethylallyl)adenosine (i(6)A). This is tRNA dimethylallyltransferase from Rhizobium meliloti (strain 1021) (Ensifer meliloti).